Reading from the N-terminus, the 405-residue chain is Splicing factor 45 (405 aa).

Serine 2 carries the post-translational modification N-acetylserine. A Phosphoserine modification is found at serine 2. Lysine 15 is covalently cross-linked (Glycyl lysine isopeptide (Lys-Gly) (interchain with G-Cter in SUMO2)). Lysine 21 carries the N6-acetyllysine modification. Glycyl lysine isopeptide (Lys-Gly) (interchain with G-Cter in SUMO2) cross-links involve residues lysine 24 and lysine 33. Lysine 41 carries the post-translational modification N6-acetyllysine; alternate. Lysine 41 participates in a covalent cross-link: Glycyl lysine isopeptide (Lys-Gly) (interchain with G-Cter in SUMO2); alternate. The segment covering 57–68 has biased composition (basic and acidic residues); the sequence is LKRGGSSDDRQI. Disordered regions lie at residues 57–88 and 114–233; these read LKRG…SGFS and RQRE…FLAN. Residue lysine 58 forms a Glycyl lysine isopeptide (Lys-Gly) (interchain with G-Cter in SUMO2) linkage. At threonine 71 the chain carries Phosphothreonine. Residues 114-153 are compositionally biased toward basic and acidic residues; that stretch reads RQREERQRQRELERQKEIEEREKRRKDRHEASGFSRRPDP. A phosphoserine mark is found at serine 155 and serine 169. Positions 182-200 are enriched in basic and acidic residues; sequence VEKDKELPRDFPYEEDSRP. Serine 222 bears the Phosphoserine mark. The 49-residue stretch at 235–283 folds into the G-patch domain; that stretch reads GGTVAHKIMQKYGFREGQGLGKHEQGLSTALSVEKTSKRGGKIIVGDAT. Position 237 is a phosphothreonine (threonine 237). Lysine 256 participates in a covalent cross-link: Glycyl lysine isopeptide (Lys-Gly) (interchain with G-Cter in SUMO2). Serine 266 is subject to Phosphoserine. Residue lysine 276 forms a Glycyl lysine isopeptide (Lys-Gly) (interchain with G-Cter in SUMO2) linkage. A phosphoserine mark is found at serine 295 and serine 297. The RRM domain occupies 310–389; sequence VVLLRNMVGA…YFGGRVVKAC (80 aa).

Binds SXL. Associates with the spliceosome. Interacts with SF3B1, SF1 and U2AF2.

The protein resides in the nucleus. Functionally, splice factor that binds to the single-stranded 3'AG at the exon/intron border and promotes its utilization in the second catalytic step. Involved in the regulation of alternative splicing and the utilization of cryptic splice sites. The polypeptide is Splicing factor 45 (Rbm17) (Mus musculus (Mouse)).